Consider the following 164-residue polypeptide: Phosphopantetheine adenylyltransferase (164 aa).

Residue Ser-9 participates in substrate binding. Residues 9 to 10 (SF) and His-17 contribute to the ATP site. Positions 41, 73, and 87 each coordinate substrate. ATP contacts are provided by residues 88–90 (GLR), Glu-98, and 123–129 (YSYISSS).

It belongs to the bacterial CoaD family. In terms of assembly, homohexamer. Mg(2+) serves as cofactor.

It localises to the cytoplasm. The catalysed reaction is (R)-4'-phosphopantetheine + ATP + H(+) = 3'-dephospho-CoA + diphosphate. It participates in cofactor biosynthesis; coenzyme A biosynthesis; CoA from (R)-pantothenate: step 4/5. Its function is as follows. Reversibly transfers an adenylyl group from ATP to 4'-phosphopantetheine, yielding dephospho-CoA (dPCoA) and pyrophosphate. The protein is Phosphopantetheine adenylyltransferase of Clostridium perfringens (strain ATCC 13124 / DSM 756 / JCM 1290 / NCIMB 6125 / NCTC 8237 / Type A).